A 171-amino-acid chain; its full sequence is Transcriptional repressor NrdR (171 aa).

Over residues 1-10 (MQCPHCHHNG) the composition is skewed to basic residues. The tract at residues 1–21 (MQCPHCHHNGSRVVDSRPTDD) is disordered. A zinc finger spans residues 3–34 (CPHCHHNGSRVVDSRPTDDGRVIRRRRECENC). The 91-residue stretch at 49–139 (LLVIKKNGAR…VYRQFKDMHV (91 aa)) folds into the ATP-cone domain. The tract at residues 152–171 (KVKLAKPSAKTTHAPKRKKD) is disordered.

It belongs to the NrdR family. Zn(2+) is required as a cofactor.

Its function is as follows. Negatively regulates transcription of bacterial ribonucleotide reductase nrd genes and operons by binding to NrdR-boxes. The chain is Transcriptional repressor NrdR from Lactiplantibacillus plantarum (strain ATCC BAA-793 / NCIMB 8826 / WCFS1) (Lactobacillus plantarum).